The sequence spans 118 residues: Large ribosomal subunit protein uL23c (118 aa).

It belongs to the universal ribosomal protein uL23 family. As to quaternary structure, part of the 50S ribosomal subunit.

Its subcellular location is the plastid. It is found in the chloroplast. Binds to 23S rRNA. The chain is Large ribosomal subunit protein uL23c (rpl23) from Stigeoclonium helveticum (Green alga).